The following is a 678-amino-acid chain: ERAD-associated E3 ubiquitin-protein ligase component HRD3A (678 aa).

Residues 1 to 25 form the signal peptide; the sequence is MRILSYGIVILSLLVFSFIEFGVHA. The tract at residues 40-71 is disordered; the sequence is GGDDNGVGESSDFDEFGESEPKSEEELDPGSW. Sel1-like repeat units follow at residues 124 to 159, 242 to 277, 279 to 313, 317 to 349, 353 to 386, 388 to 422, 506 to 537, and 540 to 568; these read PHAQSIMGFVYGIGMMREKSKSKSFLHHNFAAAGGN, ANAMYKIGLFYYFGLRGLRRDHTKALHWFLKAVDKG, PRSMELLGEIYARGAGVERNYTKALEWLTLAAKEG, AFNGIGYLYVKGYGVDKKNYTKAREYFEKAVDN, SGHYNLGVLYLKGIGVNRDVRQATKYFFVAANAG, PKAFYQLAKMFHTGVGLKKNLEMATSFYKLVAERG, AALLIGDAYYYGRGTERDFVRAAEAYMHAKSQ, and AQAMFNLGYMHEHGQGLPFDLHLAKRYYD. Asn298 and Asn335 each carry an N-linked (GlcNAc...) asparagine glycan. Residues 620-640 traverse the membrane as a helical segment; the sequence is VVFEEGNATILTLFVCLITIL.

Belongs to the sel-1 family. As to quaternary structure, interacts with OS9.

It is found in the endoplasmic reticulum membrane. In terms of biological role, component of the endoplasmic reticulum (ER) quality control system called ER-associated degradation (ERAD) and involved in ubiquitin-dependent degradation of misfolded endoplasmic reticulum proteins. Functions as an ERAD substrate-recruiting factor that recognizes misfolded proteins for the HRD1 E3 ubiquitin ligase complex. Targets the misfolded LRR receptor kinase BRI1. This is ERAD-associated E3 ubiquitin-protein ligase component HRD3A from Arabidopsis thaliana (Mouse-ear cress).